Here is a 140-residue protein sequence, read N- to C-terminus: Phosphoribosyl-AMP cyclohydrolase (140 aa).

Asp85 is a binding site for Mg(2+). Cys86 lines the Zn(2+) pocket. Mg(2+)-binding residues include Asp87 and Asp89. Cys102 and Cys109 together coordinate Zn(2+).

Belongs to the PRA-CH family. As to quaternary structure, homodimer. The cofactor is Mg(2+). Zn(2+) is required as a cofactor.

Its subcellular location is the cytoplasm. The enzyme catalyses 1-(5-phospho-beta-D-ribosyl)-5'-AMP + H2O = 1-(5-phospho-beta-D-ribosyl)-5-[(5-phospho-beta-D-ribosylamino)methylideneamino]imidazole-4-carboxamide. Its pathway is amino-acid biosynthesis; L-histidine biosynthesis; L-histidine from 5-phospho-alpha-D-ribose 1-diphosphate: step 3/9. In terms of biological role, catalyzes the hydrolysis of the adenine ring of phosphoribosyl-AMP. The protein is Phosphoribosyl-AMP cyclohydrolase of Bradyrhizobium diazoefficiens (strain JCM 10833 / BCRC 13528 / IAM 13628 / NBRC 14792 / USDA 110).